The sequence spans 334 residues: D-fructose 1,6-bisphosphatase class 2/sedoheptulose 1,7-bisphosphatase (334 aa).

Mn(2+) is bound by residues D33, E57, D85, and E88. Substrate contacts are provided by residues E88 to T90, Y119, R164 to R166, and D186 to D188. E213 lines the Mn(2+) pocket.

The protein belongs to the FBPase class 2 family. In terms of assembly, homotetramer. It depends on Mn(2+) as a cofactor.

It carries out the reaction beta-D-fructose 1,6-bisphosphate + H2O = beta-D-fructose 6-phosphate + phosphate. The catalysed reaction is D-sedoheptulose 1,7-bisphosphate + H2O = D-sedoheptulose 7-phosphate + phosphate. Its pathway is carbohydrate biosynthesis; Calvin cycle. Functionally, catalyzes the hydrolysis of fructose 1,6-bisphosphate (Fru 1,6-P2) and sedoheptulose 1,7-bisphosphate (Sed 1,7-P2) to fructose 6-phosphate and sedoheptulose 7-phosphate, respectively. The polypeptide is D-fructose 1,6-bisphosphatase class 2/sedoheptulose 1,7-bisphosphatase (Parasynechococcus marenigrum (strain WH8102)).